A 60-amino-acid polypeptide reads, in one-letter code: Ferredoxin (60 aa).

4Fe-4S ferredoxin-type domains are found at residues 2–29 (KVRV…LGDD) and 30–60 (GKAK…SVEE). [4Fe-4S] cluster contacts are provided by Cys10, Cys13, and Cys16. Cys20 and Cys43 are joined by a disulfide. Cys51 serves as a coordination point for [4Fe-4S] cluster.

Monomer. Requires [4Fe-4S] cluster as cofactor.

Functionally, ferredoxins are iron-sulfur proteins that transfer electrons in a wide variety of metabolic reactions. The polypeptide is Ferredoxin (fdx) (Thermotoga maritima (strain ATCC 43589 / DSM 3109 / JCM 10099 / NBRC 100826 / MSB8)).